A 169-amino-acid chain; its full sequence is MKYDTSELCDIYQEEVNVVEPMFSNFGGRTSFGGQIITVKCFEDNGLLYDLLEDNGHGRILLVDGGGSVRQALINAELAQLAVQNGWEGIVVYGAVRQVDQLAEFDLGIQAIAAIPAGCRDEGTGASDIRVNFGGVTFFSGDYLYADNTGIILSEEPLELDDNEEDEII.

This sequence belongs to the RraA family. As to quaternary structure, homotrimer. Binds to both RNA-binding sites in the C-terminal region of Rne and to RhlB.

The protein resides in the cytoplasm. Globally modulates RNA abundance by binding to RNase E (Rne) and regulating its endonucleolytic activity. Can modulate Rne action in a substrate-dependent manner by altering the composition of the degradosome. Modulates RNA-binding and helicase activities of the degradosome. In Photorhabdus laumondii subsp. laumondii (strain DSM 15139 / CIP 105565 / TT01) (Photorhabdus luminescens subsp. laumondii), this protein is Regulator of ribonuclease activity A.